Here is a 508-residue protein sequence, read N- to C-terminus: Photosystem II CP47 reaction center protein (508 aa).

Transmembrane regions (helical) follow at residues Ala-21–Ser-36, Ile-101–Trp-115, Gly-140–Phe-156, Ile-203–Ser-218, Val-237–Val-252, and Trp-457–Arg-472.

Belongs to the PsbB/PsbC family. PsbB subfamily. PSII is composed of 1 copy each of membrane proteins PsbA, PsbB, PsbC, PsbD, PsbE, PsbF, PsbH, PsbI, PsbJ, PsbK, PsbL, PsbM, PsbT, PsbX, PsbY, PsbZ, Psb30/Ycf12, at least 3 peripheral proteins of the oxygen-evolving complex and a large number of cofactors. It forms dimeric complexes. Binds multiple chlorophylls. PSII binds additional chlorophylls, carotenoids and specific lipids. serves as cofactor.

Its subcellular location is the plastid. It is found in the chloroplast thylakoid membrane. In terms of biological role, one of the components of the core complex of photosystem II (PSII). It binds chlorophyll and helps catalyze the primary light-induced photochemical processes of PSII. PSII is a light-driven water:plastoquinone oxidoreductase, using light energy to abstract electrons from H(2)O, generating O(2) and a proton gradient subsequently used for ATP formation. The sequence is that of Photosystem II CP47 reaction center protein from Nephroselmis olivacea (Green alga).